The chain runs to 432 residues: UPF0597 protein APL_1605 (432 aa).

This sequence belongs to the UPF0597 family.

This Actinobacillus pleuropneumoniae serotype 5b (strain L20) protein is UPF0597 protein APL_1605.